A 28-amino-acid chain; its full sequence is Ranatuerin-2LTa (28 aa).

Cysteines 23 and 28 form a disulfide.

Expressed by the skin glands.

Its subcellular location is the secreted. Has antibacterial activity. This Rana latastei (Italian agile frog) protein is Ranatuerin-2LTa.